The sequence spans 93 residues: Putative pterin-4-alpha-carbinolamine dehydratase (93 aa).

It belongs to the pterin-4-alpha-carbinolamine dehydratase family.

It catalyses the reaction (4aS,6R)-4a-hydroxy-L-erythro-5,6,7,8-tetrahydrobiopterin = (6R)-L-erythro-6,7-dihydrobiopterin + H2O. The polypeptide is Putative pterin-4-alpha-carbinolamine dehydratase (Trichodesmium erythraeum (strain IMS101)).